The chain runs to 696 residues: Elongation factor G (696 aa).

A tr-type G domain is found at 8–290 (ERYRNIGISA…KVIELMPAPT (283 aa)). GTP is bound by residues 17–24 (AHIDAGKT), 88–92 (DTPGH), and 142–145 (NKMD).

It belongs to the TRAFAC class translation factor GTPase superfamily. Classic translation factor GTPase family. EF-G/EF-2 subfamily.

It localises to the cytoplasm. Functionally, catalyzes the GTP-dependent ribosomal translocation step during translation elongation. During this step, the ribosome changes from the pre-translocational (PRE) to the post-translocational (POST) state as the newly formed A-site-bound peptidyl-tRNA and P-site-bound deacylated tRNA move to the P and E sites, respectively. Catalyzes the coordinated movement of the two tRNA molecules, the mRNA and conformational changes in the ribosome. The protein is Elongation factor G of Thiobacillus denitrificans (strain ATCC 25259 / T1).